The chain runs to 133 residues: Large ribosomal subunit protein uL11 (133 aa).

Belongs to the universal ribosomal protein uL11 family. As to quaternary structure, part of the ribosomal stalk of the 50S ribosomal subunit. Interacts with L10 and the large rRNA to form the base of the stalk. L10 forms an elongated spine to which 2 L12 dimers bind in a sequential fashion forming a pentameric L10(L12)2(L12)2 complex. One or more lysine residues are methylated.

In terms of biological role, forms part of the ribosomal stalk which helps the ribosome interact with GTP-bound translation factors. The protein is Large ribosomal subunit protein uL11 of Geobacillus stearothermophilus (Bacillus stearothermophilus).